We begin with the raw amino-acid sequence, 471 residues long: NADH-quinone oxidoreductase subunit N (471 aa).

The next 14 helical transmembrane spans lie at 6-26, 30-50, 70-90, 98-118, 123-143, 158-178, 198-218, 230-250, 264-284, 292-312, 320-340, 365-385, 400-420, and 438-458; these read FILP…LGVY, SSNI…ILIF, LSSF…SIST, IFLI…MVMI, LMVF…LASF, FVLS…VYGF, LTFG…AVPF, PTAV…TVFI, WQPI…IAAI, LIAY…STGS, IVYM…LLML, LSLL…GFFA, FLAI…LKII, and IWLK…FIFP.

Belongs to the complex I subunit 2 family. In terms of assembly, NDH-1 is composed of 14 different subunits. Subunits NuoA, H, J, K, L, M, N constitute the membrane sector of the complex.

The protein localises to the cell inner membrane. The catalysed reaction is a quinone + NADH + 5 H(+)(in) = a quinol + NAD(+) + 4 H(+)(out). Its function is as follows. NDH-1 shuttles electrons from NADH, via FMN and iron-sulfur (Fe-S) centers, to quinones in the respiratory chain. The immediate electron acceptor for the enzyme in this species is believed to be ubiquinone. Couples the redox reaction to proton translocation (for every two electrons transferred, four hydrogen ions are translocated across the cytoplasmic membrane), and thus conserves the redox energy in a proton gradient. The polypeptide is NADH-quinone oxidoreductase subunit N (Pelagibacter ubique (strain HTCC1062)).